The sequence spans 338 residues: Homocysteine S-methyltransferase 3 (338 aa).

In terms of domain architecture, Hcy-binding spans 12-326 (AVRRWVDAAG…NTIRAIHRTL (315 aa)). Zn(2+) contacts are provided by cysteine 244, cysteine 311, and cysteine 312.

In terms of assembly, monomer. Zn(2+) serves as cofactor.

The catalysed reaction is S-methyl-L-methionine + L-homocysteine = 2 L-methionine + H(+). Its function is as follows. Catalyzes methyl transfer from S-methylmethionine (SMM) to adenosyl-L-homocysteine (AdoMet). SMM degradation (by HMT-1, HMT-2, HMT-3 and HMT-4) and biosynthesis (by MMT1) constitute the SMM cycle in plants, which is probably required to achieve short term control of AdoMet level. The protein is Homocysteine S-methyltransferase 3 (HMT-3) of Zea mays (Maize).